The following is a 560-amino-acid chain: MNIDVATLLSQNDILLLFVVLALGLFIAKVKIGSFQLGSSIGVLITALFMGSLGYTFTADSLNIGFMLFIFCVGIEAGPNFFGIFLRDGKHYLLLVLVVLISAISLSFLTGYYFNLDYGLSTGMMAGALTATPVLVGAKDALNSGLAVLPEGVDFSKVMDNLSVGYAFSYLIGLTSLILLARLLPQLQKQNLQDSAMQIAQERGIGSAGQRKVYLPIIRAYRVGQELIDWTDGKNLRELGIHRQTGCHIERIRRNGILANPDGDYILQQGDEIALVGYPDSHARLDSSFRNGKEVFDRNLLDLRIAEEEIVVKNDNIAGKRLSELNLSEYGCFLNRVVRAQIEMPIEHDIVLAKGDILQVSGEKSKVHHIADKIGFISIHSQVSDLLAFCSFFILGIMFGMITMSFGQVTFGLGNAVGLLISGITLGFLRANHPTFGYVPQGALNMTKNLGLLVFMVGIGLSAGGNIIEYFSEDGLKVLAAALIVSVIPVILAYLVGAYILKMNRALLIGAIIGARTCGPAMDVVNEHARSTIPALGYAGTYAIANILMTVAGTIMILLA.

5 helical membrane passes run 14–34, 37–57, 66–86, 94–114, and 161–181; these read ILLL…KIGS, LGSS…GYTF, FMLF…GIFL, LLVL…GYYF, and NLSV…ILLA. RCK C-terminal domains follow at residues 203 to 292 and 293 to 376; these read RGIG…FRNG and KEVF…KIGF. Helical transmembrane passes span 386 to 406, 409 to 429, 451 to 471, 478 to 498, and 539 to 559; these read LLAF…TMSF, VTFG…LGFL, GLLV…IEYF, VLAA…LVGA, and AGTY…MILL.

Belongs to the AAE transporter (TC 2.A.81) family. YbjL subfamily.

The protein localises to the cell membrane. The protein is Putative transport protein VSAL_I2029 of Aliivibrio salmonicida (strain LFI1238) (Vibrio salmonicida (strain LFI1238)).